The sequence spans 407 residues: Probable endo-beta-1,4-glucanase celB (407 aa).

A signal peptide spans 1–18; sequence MALTLAATALVLLPLVTA. The N-linked (GlcNAc...) asparagine glycan is linked to Asn-136. The active-site Nucleophile is the Glu-216. Glu-221 (proton donor) is an active-site residue.

The protein belongs to the glycosyl hydrolase 7 (cellulase C) family.

The protein resides in the secreted. The catalysed reaction is Endohydrolysis of (1-&gt;4)-beta-D-glucosidic linkages in cellulose, lichenin and cereal beta-D-glucans.. Functionally, has endoglucanase activity on substrates containing beta-1,4 glycosidic bonds, like in carboxymethylcellulose (CMC), hydroxyethylcellulose (HEC) and beta-glucan. Involved in the degradation of complex natural cellulosic substrates. The sequence is that of Probable endo-beta-1,4-glucanase celB (celB) from Neosartorya fischeri (strain ATCC 1020 / DSM 3700 / CBS 544.65 / FGSC A1164 / JCM 1740 / NRRL 181 / WB 181) (Aspergillus fischerianus).